A 283-amino-acid polypeptide reads, in one-letter code: Formamidopyrimidine-DNA glycosylase (283 aa).

The Schiff-base intermediate with DNA role is filled by Pro2. Residue Glu3 is the Proton donor of the active site. The Proton donor; for beta-elimination activity role is filled by Lys58. His100, Arg119, and Arg162 together coordinate DNA. The FPG-type zinc-finger motif lies at 247-283; that stretch reads DVYGREGEPCRRAGCTGTVTRITQSGRSSFYCGKCQR. Arg273 functions as the Proton donor; for delta-elimination activity in the catalytic mechanism.

This sequence belongs to the FPG family. As to quaternary structure, monomer. The cofactor is Zn(2+).

It catalyses the reaction Hydrolysis of DNA containing ring-opened 7-methylguanine residues, releasing 2,6-diamino-4-hydroxy-5-(N-methyl)formamidopyrimidine.. The enzyme catalyses 2'-deoxyribonucleotide-(2'-deoxyribose 5'-phosphate)-2'-deoxyribonucleotide-DNA = a 3'-end 2'-deoxyribonucleotide-(2,3-dehydro-2,3-deoxyribose 5'-phosphate)-DNA + a 5'-end 5'-phospho-2'-deoxyribonucleoside-DNA + H(+). In terms of biological role, involved in base excision repair of DNA damaged by oxidation or by mutagenic agents. Acts as a DNA glycosylase that recognizes and removes damaged bases. Has a preference for oxidized purines, such as 7,8-dihydro-8-oxoguanine (8-oxoG). Has AP (apurinic/apyrimidinic) lyase activity and introduces nicks in the DNA strand. Cleaves the DNA backbone by beta-delta elimination to generate a single-strand break at the site of the removed base with both 3'- and 5'-phosphates. The chain is Formamidopyrimidine-DNA glycosylase from Ruegeria sp. (strain TM1040) (Silicibacter sp.).